Consider the following 596-residue polypeptide: Nitrite reductase (596 aa).

Residues 1–29 form the signal peptide; it reads MRQRTPFARPGLLASAALALVLGPLAVAA. Positions 30–76 are N-terminal tail; it reads QEQAAPPKDPAAALEDHKTKTDNRYEPSLDNLAQQDVAALGAPEGIP. H46 is a binding site for heme c. Residues Y54 and S57 each coordinate heme d1. Residues 77 to 162 form the Cytochrome c domain; it reads ALSDAQYNEA…ANYLLLDPAA (86 aa). Heme c contacts are provided by C94, C97, H98, K108, and Y122. Heme d1 contacts are provided by W138, R203, H229, R232, R245, R272, Y292, R420, Q536, and T583. The D1-heme domain stretch occupies residues 163–596; that stretch reads PPEFGMKEMR…NVYNTMTDTY (434 aa).

In terms of assembly, homodimer. It depends on heme c as a cofactor. Heme is required as a cofactor.

It is found in the periplasm. It catalyses the reaction nitric oxide + Fe(III)-[cytochrome c] + H2O = Fe(II)-[cytochrome c] + nitrite + 2 H(+). The enzyme catalyses A + NH4(+) + H2O = hydroxylamine + AH2 + H(+). In terms of biological role, inactivation of this cytochrome oxidase results in the loss of nitrite and nitric oxide reductase activities, but not of nitrous oxide reductase activity. The protein is Nitrite reductase (nirS) of Paracoccus denitrificans (strain Pd 1222).